The sequence spans 69 residues: Microcin H47 immunity protein MchI (69 aa).

The Cytoplasmic portion of the chain corresponds to 1-6 (MSYKKL). The chain crosses the membrane as a helical span at residues 7–29 (YQLTAIFSLPLTILLVSLSSLRI). At 30–38 (VGEGNSYVD) the chain is on the periplasmic side. A helical membrane pass occupies residues 39 to 61 (VFLSFIIFLGFIELIHGIRKILV). The Cytoplasmic segment spans residues 62 to 69 (WSGWKNGS).

It localises to the cell membrane. Protects a microcin H47-producer cell against microcin H47. The sequence is that of Microcin H47 immunity protein MchI (mchI) from Escherichia coli.